A 294-amino-acid polypeptide reads, in one-letter code: Aquaporin NIP1-2 (294 aa).

At Met1 the chain carries N-acetylmethionine. 2 helical membrane-spanning segments follow: residues 54 to 74 (LMAEVLGTYFLIFAGCAAVAV) and 82 to 102 (VTLPGIAIVWGLTVMVLVYSL). The NPA 1 signature appears at 111–113 (NPA). 3 consecutive transmembrane segments (helical) span residues 133–153 (VISQVIGSTLAAATLRLLFGL), 177–197 (SFVIEFIITFYLMFVISGVAT), and 201–221 (AIGELAGLAVGSTVLLNVIIA). The short motif at 230–232 (NPG) is the NPA 2 element. A helical transmembrane segment spans residues 248 to 268 (WIYIVSPIVGAVSGAWVYNMV). Phosphoserine is present on Ser283.

Belongs to the MIP/aquaporin (TC 1.A.8) family. NIP (TC 1.A.8.12) subfamily. Expressed in developing seeds.

Its subcellular location is the membrane. Functionally, water channel probably required to promote glycerol permeability and water transport across cell membranes. The chain is Aquaporin NIP1-2 (NIP1-2) from Arabidopsis thaliana (Mouse-ear cress).